A 523-amino-acid chain; its full sequence is GMP synthase [glutamine-hydrolyzing] (523 aa).

In terms of domain architecture, Glutamine amidotransferase type-1 spans 8 to 205 (KILILDFGSQ…VVNICGCATN (198 aa)). Catalysis depends on Cys85, which acts as the Nucleophile. Active-site residues include His179 and Glu181. The GMPS ATP-PPase domain occupies 206-398 (WTPENIIEDA…LGLPAEMLNR (193 aa)). Residue 233–239 (SGGVDSS) coordinates ATP.

As to quaternary structure, homodimer.

The enzyme catalyses XMP + L-glutamine + ATP + H2O = GMP + L-glutamate + AMP + diphosphate + 2 H(+). It participates in purine metabolism; GMP biosynthesis; GMP from XMP (L-Gln route): step 1/1. Functionally, catalyzes the synthesis of GMP from XMP. The protein is GMP synthase [glutamine-hydrolyzing] of Actinobacillus succinogenes (strain ATCC 55618 / DSM 22257 / CCUG 43843 / 130Z).